Consider the following 98-residue polypeptide: Small ribosomal subunit protein bS20 (98 aa).

Basic residues predominate over residues 1-15 (MAPKKTTKKGGPKKR). The interval 1-21 (MAPKKTTKKGGPKKRPSAEKR) is disordered.

This sequence belongs to the bacterial ribosomal protein bS20 family.

Its function is as follows. Binds directly to 16S ribosomal RNA. This is Small ribosomal subunit protein bS20 from Chlamydia abortus (strain DSM 27085 / S26/3) (Chlamydophila abortus).